We begin with the raw amino-acid sequence, 310 residues long: E3 ubiquitin-protein ligase AIP2 (310 aa).

An RING-type; atypical zinc finger spans residues 230-271 (CCICKENLVIGDKMQELPCKHTFHPPCLKPWLDEHNSCPICR). A coiled-coil region spans residues 276–306 (TDDQKYENWKEREKEAEEERKGAENAVRGGE). Over residues 285 to 298 (KEREKEAEEERKGA) the composition is skewed to basic and acidic residues. A disordered region spans residues 285-310 (KEREKEAEEERKGAENAVRGGEYMYV).

As to quaternary structure, interacts with ABI3 (via C-terminus). Auto-ubiquitinated. Highly expressed in leaves and at lower levels in flowers and seeds.

It is found in the nucleus. It localises to the cytoplasm. The enzyme catalyses S-ubiquitinyl-[E2 ubiquitin-conjugating enzyme]-L-cysteine + [acceptor protein]-L-lysine = [E2 ubiquitin-conjugating enzyme]-L-cysteine + N(6)-ubiquitinyl-[acceptor protein]-L-lysine.. Its pathway is protein modification; protein ubiquitination. Its function is as follows. E3 ubiquitin-protein ligase that acts as a negative regulator of abscisic acid (ABA) signaling. Mediates ubiquitination and subsequent proteasomal degradation of the transcription factor ABI3. The protein is E3 ubiquitin-protein ligase AIP2 (AIP2) of Arabidopsis thaliana (Mouse-ear cress).